A 445-amino-acid polypeptide reads, in one-letter code: 26S proteasome regulatory subunit RPN5 (445 aa).

Serine 2 carries the N-acetylserine modification. One can recognise a PCI domain in the interval 233 to 407 (EYLEVAQYLQ…KIVNFEKPKN (175 aa)).

It belongs to the proteasome subunit p55 family. Post-translationally, N-acetylated by NAT1.

Its function is as follows. Acts as a regulatory subunit of the 26S proteasome which is involved in the ATP-dependent degradation of ubiquitinated proteins. In Saccharomyces cerevisiae (strain ATCC 204508 / S288c) (Baker's yeast), this protein is 26S proteasome regulatory subunit RPN5 (RPN5).